The primary structure comprises 79 residues: Small ribosomal subunit protein bS16c (79 aa).

Belongs to the bacterial ribosomal protein bS16 family.

Its subcellular location is the plastid. The protein localises to the chloroplast. This Thalassiosira pseudonana (Marine diatom) protein is Small ribosomal subunit protein bS16c.